Consider the following 631-residue polypeptide: Phosphomethylpyrimidine synthase (631 aa).

Residues Asn-239, Met-268, Tyr-297, His-333, 353–355 (SRG), 394–397 (DGLR), and Glu-433 contribute to the substrate site. His-437 contributes to the Zn(2+) binding site. Tyr-460 is a binding site for substrate. Residue His-501 coordinates Zn(2+). Positions 581, 584, and 589 each coordinate [4Fe-4S] cluster.

The protein belongs to the ThiC family. Homodimer. The cofactor is [4Fe-4S] cluster.

The catalysed reaction is 5-amino-1-(5-phospho-beta-D-ribosyl)imidazole + S-adenosyl-L-methionine = 4-amino-2-methyl-5-(phosphooxymethyl)pyrimidine + CO + 5'-deoxyadenosine + formate + L-methionine + 3 H(+). Its pathway is cofactor biosynthesis; thiamine diphosphate biosynthesis. Functionally, catalyzes the synthesis of the hydroxymethylpyrimidine phosphate (HMP-P) moiety of thiamine from aminoimidazole ribotide (AIR) in a radical S-adenosyl-L-methionine (SAM)-dependent reaction. This Escherichia coli O7:K1 (strain IAI39 / ExPEC) protein is Phosphomethylpyrimidine synthase.